A 774-amino-acid chain; its full sequence is RNA exonuclease 5 (774 aa).

A compositionally biased stretch (basic and acidic residues) spans 1 to 19; the sequence is MEPEREGTERHPRKVRESR. A disordered region spans residues 1–22; sequence MEPEREGTERHPRKVRESRQAP. The region spanning 228 to 376 is the Exonuclease domain; it reads LFGLDCEMCL…EDARTILELA (149 aa). RRM domains lie at 505-579 and 600-679; these read STVY…RPVT and GSIY…RHLH.

The sequence is that of RNA exonuclease 5 from Homo sapiens (Human).